Reading from the N-terminus, the 274-residue chain is S-methyl-5'-thioadenosine phosphorylase (274 aa).

Phosphate is bound by residues serine 20, arginine 62–histidine 63, and serine 95–alanine 96. Substrate is bound at residue methionine 194. Threonine 195 contacts phosphate. Aspartate 218–aspartate 220 lines the substrate pocket.

This sequence belongs to the PNP/MTAP phosphorylase family. MTAP subfamily. As to quaternary structure, homohexamer. Dimer of a homotrimer.

The enzyme catalyses S-methyl-5'-thioadenosine + phosphate = 5-(methylsulfanyl)-alpha-D-ribose 1-phosphate + adenine. It participates in amino-acid biosynthesis; L-methionine biosynthesis via salvage pathway; S-methyl-5-thio-alpha-D-ribose 1-phosphate from S-methyl-5'-thioadenosine (phosphorylase route): step 1/1. In terms of biological role, catalyzes the reversible phosphorylation of S-methyl-5'-thioadenosine (MTA) to adenine and 5-methylthioribose-1-phosphate. Involved in the breakdown of MTA, a major by-product of polyamine biosynthesis. Responsible for the first step in the methionine salvage pathway after MTA has been generated from S-adenosylmethionine. Has broad substrate specificity with 6-aminopurine nucleosides as preferred substrates. The polypeptide is S-methyl-5'-thioadenosine phosphorylase (Hyperthermus butylicus (strain DSM 5456 / JCM 9403 / PLM1-5)).